An 85-amino-acid chain; its full sequence is Large ribosomal subunit protein bL27 (85 aa).

The interval 1-21 (MAHKKGGGSTHNGRDSKPKML) is disordered.

The protein belongs to the bacterial ribosomal protein bL27 family.

This chain is Large ribosomal subunit protein bL27, found in Albidiferax ferrireducens (strain ATCC BAA-621 / DSM 15236 / T118) (Rhodoferax ferrireducens).